Reading from the N-terminus, the 340-residue chain is Ornithine carbamoyltransferase (340 aa).

Residues 57–60 (STRT), Gln-84, Arg-108, and 135–138 (HPTQ) contribute to the carbamoyl phosphate site. Residues Asn-167, Asp-231, and 235-236 (SM) contribute to the L-ornithine site. Carbamoyl phosphate contacts are provided by residues 272–273 (CL) and Arg-317.

The protein belongs to the aspartate/ornithine carbamoyltransferase superfamily. OTCase family.

It is found in the cytoplasm. It catalyses the reaction carbamoyl phosphate + L-ornithine = L-citrulline + phosphate + H(+). The protein operates within amino-acid biosynthesis; L-arginine biosynthesis; L-arginine from L-ornithine and carbamoyl phosphate: step 1/3. Functionally, reversibly catalyzes the transfer of the carbamoyl group from carbamoyl phosphate (CP) to the N(epsilon) atom of ornithine (ORN) to produce L-citrulline. The polypeptide is Ornithine carbamoyltransferase (argF) (Lactiplantibacillus plantarum (strain ATCC BAA-793 / NCIMB 8826 / WCFS1) (Lactobacillus plantarum)).